The primary structure comprises 276 residues: Elongation factor Ts (276 aa).

Residues 80–83 form an involved in Mg(2+) ion dislocation from EF-Tu region; it reads TDFV.

It belongs to the EF-Ts family.

Its subcellular location is the cytoplasm. In terms of biological role, associates with the EF-Tu.GDP complex and induces the exchange of GDP to GTP. It remains bound to the aminoacyl-tRNA.EF-Tu.GTP complex up to the GTP hydrolysis stage on the ribosome. This Kocuria rhizophila (strain ATCC 9341 / DSM 348 / NBRC 103217 / DC2201) protein is Elongation factor Ts.